The following is a 526-amino-acid chain: Trigger factor (526 aa).

The PPIase FKBP-type domain occupies 162–243; that stretch reads GDFVSIDLSA…LGSVKERELP (82 aa). Over residues 425–460 the composition is skewed to basic and acidic residues; it reads DTDGADVDPKEYFGDVEAEGDKADKAETDKAEEKPK. The tract at residues 425-526 is disordered; sequence DTDGADVDPK…AKKAAEKKED (102 aa). The segment covering 461–517 has biased composition (basic residues); that stretch reads KAPAKKSTTKKSTAKKSTAKKSTAKKSTAKKSTAKKSTTKKATKSTAKKSTAKKTTA.

The protein belongs to the FKBP-type PPIase family. Tig subfamily.

The protein localises to the cytoplasm. It carries out the reaction [protein]-peptidylproline (omega=180) = [protein]-peptidylproline (omega=0). In terms of biological role, involved in protein export. Acts as a chaperone by maintaining the newly synthesized protein in an open conformation. Functions as a peptidyl-prolyl cis-trans isomerase. In Corynebacterium jeikeium (strain K411), this protein is Trigger factor.